The chain runs to 524 residues: PiggyBac transposable element-derived protein 5 (524 aa).

A disordered region spans residues 30–117; that stretch reads DDVFGESGPD…DTGGPTRKMP (88 aa). Residues 47–59 are compositionally biased toward low complexity; the sequence is STSAASRSSSAAS. Over residues 67–79 the composition is skewed to pro residues; sequence PGPPGAAPPPPRA. Residues 98–108 show a composition bias toward basic and acidic residues; it reads LRDRPPPRFED. At Ser-521 the chain carries Phosphoserine.

The protein resides in the nucleus. Functionally, transposase that mediates sequence-specific genomic rearrangements. Can induce genomic rearrangements that inactivate the HPRT1 gene. The sequence is that of PiggyBac transposable element-derived protein 5 (PGBD5) from Homo sapiens (Human).